A 634-amino-acid polypeptide reads, in one-letter code: MTNSNLRTENHFDYVKITLASPDRVMEWGQRTLPNGQVVGEVTKPETINYRTLKPEMDGLFCEKIFGPSKDWECHCGKYKRVRHRGIVCERCGVEVTESRVRRHRMGFIKLAAPVSHVWYLKGIPSYVAILLDMPLRDVEQIVYFNCYVVLDAGDHKDLKYKQLLTEDEWLEIEDEIYAEDSEIENEPVVGIGAEALKQLLEDLQLNAVAEQLREEIAGSKGQKRAKLIKRLRVIDNFIATNARPEWMVLDAIPVIPPDLRPMVQLDGGRFATSDLNDLYRRVINRNNRLARLQEILAPEIIVRNEKRMLQEAVDALIDNGRRGRTVVGANNRPLKSLSDIIEGKQGRFRQNLLGKRVDYSGRSVIVVGPKLKMHQCGLPKEMAIELFQPFVIHRLIRQNIVNNIKAAKKLIQRADDEVMQVLQEVIDGHPIMLNRAPTLHRLGIQAFEPKLVDGRAIQLHPLVCPAFNADFDGDQMAVHVPLAIEAQTEARMLMLASNNILSPATGDPIITPSQDMVLGSYYLTALQPQMHPIEFGDRSRTYSSLEDVIHAFEDNRITLHDWVWVRFNGEVEDEDEREEPITTETLSDGTRFEQWTYRRDRFDEDGALISRYILTTVGRVVMNHTIIDAVAAT.

The Zn(2+) site is built by C74, C76, C89, and C92. Positions 471, 473, and 475 each coordinate Mg(2+).

Belongs to the RNA polymerase beta' chain family. RpoC1 subfamily. In terms of assembly, in cyanobacteria the RNAP catalytic core is composed of 2 alpha, 1 beta, 1 beta', 1 gamma and 1 omega subunit. When a sigma factor is associated with the core the holoenzyme is formed, which can initiate transcription. It depends on Mg(2+) as a cofactor. Requires Zn(2+) as cofactor.

It catalyses the reaction RNA(n) + a ribonucleoside 5'-triphosphate = RNA(n+1) + diphosphate. Functionally, DNA-dependent RNA polymerase catalyzes the transcription of DNA into RNA using the four ribonucleoside triphosphates as substrates. The polypeptide is DNA-directed RNA polymerase subunit gamma (Synechococcus sp. (strain CC9311)).